Reading from the N-terminus, the 245-residue chain is tRNA1(Val) (adenine(37)-N6)-methyltransferase (245 aa).

It belongs to the methyltransferase superfamily. tRNA (adenine-N(6)-)-methyltransferase family.

The protein localises to the cytoplasm. It carries out the reaction adenosine(37) in tRNA1(Val) + S-adenosyl-L-methionine = N(6)-methyladenosine(37) in tRNA1(Val) + S-adenosyl-L-homocysteine + H(+). Functionally, specifically methylates the adenine in position 37 of tRNA(1)(Val) (anticodon cmo5UAC). This chain is tRNA1(Val) (adenine(37)-N6)-methyltransferase, found in Salmonella paratyphi A (strain ATCC 9150 / SARB42).